The sequence spans 124 residues: Small ribosomal subunit protein uS12 (124 aa).

The residue at position 89 (Asp89) is a 3-methylthioaspartic acid.

It belongs to the universal ribosomal protein uS12 family. In terms of assembly, part of the 30S ribosomal subunit. Contacts proteins S8 and S17. May interact with IF1 in the 30S initiation complex.

In terms of biological role, with S4 and S5 plays an important role in translational accuracy. Its function is as follows. Interacts with and stabilizes bases of the 16S rRNA that are involved in tRNA selection in the A site and with the mRNA backbone. Located at the interface of the 30S and 50S subunits, it traverses the body of the 30S subunit contacting proteins on the other side and probably holding the rRNA structure together. The combined cluster of proteins S8, S12 and S17 appears to hold together the shoulder and platform of the 30S subunit. The sequence is that of Small ribosomal subunit protein uS12 from Shewanella loihica (strain ATCC BAA-1088 / PV-4).